Reading from the N-terminus, the 110-residue chain is Phosphoribosyl-AMP cyclohydrolase (110 aa).

Aspartate 74 lines the Mg(2+) pocket. Cysteine 75 is a binding site for Zn(2+). Residues aspartate 76 and aspartate 78 each coordinate Mg(2+). The Zn(2+) site is built by cysteine 91 and cysteine 98.

Belongs to the PRA-CH family. In terms of assembly, homodimer. Mg(2+) is required as a cofactor. The cofactor is Zn(2+).

The protein resides in the cytoplasm. The enzyme catalyses 1-(5-phospho-beta-D-ribosyl)-5'-AMP + H2O = 1-(5-phospho-beta-D-ribosyl)-5-[(5-phospho-beta-D-ribosylamino)methylideneamino]imidazole-4-carboxamide. The protein operates within amino-acid biosynthesis; L-histidine biosynthesis; L-histidine from 5-phospho-alpha-D-ribose 1-diphosphate: step 3/9. In terms of biological role, catalyzes the hydrolysis of the adenine ring of phosphoribosyl-AMP. The polypeptide is Phosphoribosyl-AMP cyclohydrolase (Lacticaseibacillus paracasei (strain ATCC 334 / BCRC 17002 / CCUG 31169 / CIP 107868 / KCTC 3260 / NRRL B-441) (Lactobacillus paracasei)).